Consider the following 538-residue polypeptide: Phosphoenolpyruvate carboxykinase (ATP) (538 aa).

Substrate is bound by residues Arg64, Tyr205, and Lys211. ATP-binding positions include Lys211, His230, and 246–254 (GLSGTGKTT). The Mn(2+) site is built by Lys211 and His230. Asp267 lines the Mn(2+) pocket. ATP-binding positions include Glu295, Arg331, 447 to 448 (RI), and Thr453. Residue Arg331 coordinates substrate.

Belongs to the phosphoenolpyruvate carboxykinase (ATP) family. In terms of assembly, monomer. Mn(2+) serves as cofactor.

It is found in the cytoplasm. It catalyses the reaction oxaloacetate + ATP = phosphoenolpyruvate + ADP + CO2. It functions in the pathway carbohydrate biosynthesis; gluconeogenesis. Involved in the gluconeogenesis. Catalyzes the conversion of oxaloacetate (OAA) to phosphoenolpyruvate (PEP) through direct phosphoryl transfer between the nucleoside triphosphate and OAA. This Baumannia cicadellinicola subsp. Homalodisca coagulata protein is Phosphoenolpyruvate carboxykinase (ATP).